Reading from the N-terminus, the 276-residue chain is Large ribosomal subunit protein uL2 (276 aa).

Disordered regions lie at residues 1–20 (MGIK…TTND) and 219–276 (TVRG…RRKK). Residues 7–20 (NPTTNGRRNMTTND) are compositionally biased toward polar residues.

This sequence belongs to the universal ribosomal protein uL2 family. Part of the 50S ribosomal subunit. Forms a bridge to the 30S subunit in the 70S ribosome.

One of the primary rRNA binding proteins. Required for association of the 30S and 50S subunits to form the 70S ribosome, for tRNA binding and peptide bond formation. It has been suggested to have peptidyltransferase activity; this is somewhat controversial. Makes several contacts with the 16S rRNA in the 70S ribosome. The polypeptide is Large ribosomal subunit protein uL2 (Bacillus cereus (strain G9842)).